The primary structure comprises 109 residues: Phosphoribosyl-ATP pyrophosphatase (109 aa).

The protein belongs to the PRA-PH family.

It is found in the cytoplasm. The enzyme catalyses 1-(5-phospho-beta-D-ribosyl)-ATP + H2O = 1-(5-phospho-beta-D-ribosyl)-5'-AMP + diphosphate + H(+). It participates in amino-acid biosynthesis; L-histidine biosynthesis; L-histidine from 5-phospho-alpha-D-ribose 1-diphosphate: step 2/9. This chain is Phosphoribosyl-ATP pyrophosphatase, found in Geobacter metallireducens (strain ATCC 53774 / DSM 7210 / GS-15).